We begin with the raw amino-acid sequence, 512 residues long: ATP synthase subunit alpha (512 aa).

Residue 169–176 participates in ATP binding; the sequence is GDRQTGKT.

The protein belongs to the ATPase alpha/beta chains family. F-type ATPases have 2 components, CF(1) - the catalytic core - and CF(0) - the membrane proton channel. CF(1) has five subunits: alpha(3), beta(3), gamma(1), delta(1), epsilon(1). CF(0) has three main subunits: a(1), b(2) and c(9-12). The alpha and beta chains form an alternating ring which encloses part of the gamma chain. CF(1) is attached to CF(0) by a central stalk formed by the gamma and epsilon chains, while a peripheral stalk is formed by the delta and b chains.

It localises to the cell inner membrane. The enzyme catalyses ATP + H2O + 4 H(+)(in) = ADP + phosphate + 5 H(+)(out). Functionally, produces ATP from ADP in the presence of a proton gradient across the membrane. The alpha chain is a regulatory subunit. This is ATP synthase subunit alpha from Rickettsia canadensis (strain McKiel).